A 318-amino-acid chain; its full sequence is NADH-ubiquinone oxidoreductase chain 1 (318 aa).

Transmembrane regions (helical) follow at residues 2-22 (FLINTLLLILPVLLAMAFLTL), 69-89 (LLFIIAPTLALTLALSMWLPI), 102-122 (ILFILATSSLAVYSILWSGWA), 146-166 (LAIILLCILLMNGSFTLSSLI), 171-191 (YMWILLPAWPLAMMWFISTLA), 222-242 (LFFLAEYTNIILMNALTAILF), 253-273 (EMFTVNFATKTLLLTMTFLWI), and 294-314 (LPLTLALCMWHISMPIMLSSI).

It belongs to the complex I subunit 1 family. Core subunit of respiratory chain NADH dehydrogenase (Complex I) which is composed of 45 different subunits.

It localises to the mitochondrion inner membrane. The enzyme catalyses a ubiquinone + NADH + 5 H(+)(in) = a ubiquinol + NAD(+) + 4 H(+)(out). Core subunit of the mitochondrial membrane respiratory chain NADH dehydrogenase (Complex I) which catalyzes electron transfer from NADH through the respiratory chain, using ubiquinone as an electron acceptor. Essential for the catalytic activity and assembly of complex I. This chain is NADH-ubiquinone oxidoreductase chain 1 (MT-ND1), found in Oryctolagus cuniculus (Rabbit).